A 1692-amino-acid chain; its full sequence is Tyrosine-protein phosphatase non-receptor type 23 (1692 aa).

The 387-residue stretch at 8-394 (PMIWLDLKEA…AKIEDKNEVL (387 aa)) folds into the BRO1 domain. 2 TPR repeats span residues 250 to 283 (AVAH…LNEA) and 374 to 407 (EEKA…DPET). Residues 552–639 (KAVLQNLKRI…RALTEANVQY (88 aa)) adopt a coiled-coil conformation. 3 disordered regions span residues 711–788 (DREL…PATH), 884–923 (DSVQ…PQPQ), and 944–1199 (TYSI…LLQP). Threonine 744 is modified (phosphothreonine). Residues 773–1186 (HFSPGPFPSS…SSSPESQHGG (414 aa)) are his. Residues 774 to 785 (FSPGPFPSSTGP) show a composition bias toward low complexity. Residues 884 to 894 (DSVQAPISSHT) show a composition bias toward polar residues. The segment covering 897-923 (RPNPTPALPQPCFPVPQPVPQSVPQPQ) has biased composition (pro residues). Arginine 974 is subject to Omega-N-methylarginine. 21 repeat units span residues 977 to 978 (PQ), 979 to 980 (AQ), 981 to 982 (AQ), 983 to 984 (PQ), 985 to 986 (PQ), 987 to 988 (PQ), 989 to 990 (PQ), 991 to 992 (PQ), 993 to 994 (PQ), 995 to 996 (PQ), 997 to 998 (PQ), 999 to 1000 (PQ), 1001 to 1002 (PQ), 1003 to 1004 (PQ), 1005 to 1006 (SQ), 1007 to 1008 (SQ), 1009 to 1010 (PQ), 1011 to 1012 (PQ), 1013 to 1014 (PQ), 1015 to 1016 (PQ), and 1017 to 1018 (PQ). Residues 977 to 1018 (PQAQAQPQPQPQPQPQPQPQPQPQPQPQSQSQPQPQPQPQPQ) form a 21 X 2 AA approximate tandem repeats of P-Q region. A compositionally biased stretch (pro residues) spans 984–1002 (QPQPQPQPQPQPQPQPQPQ). Composition is skewed to pro residues over residues 1093 to 1102 (FPSPGPPHPH) and 1127 to 1165 (GPPP…PPPC). Phosphoserine is present on residues serine 1178 and serine 1179. The residue at position 1187 (threonine 1187) is a Phosphothreonine. The 261-residue stretch at 1248 to 1508 (DAIWRELQEA…KFCHEALVRH (261 aa)) folds into the Tyrosine-protein phosphatase domain. Cysteine 1448 acts as the Phosphocysteine intermediate in catalysis. A disordered region spans residues 1574–1638 (ASLPGLVEPP…PSSSLELLAS (65 aa)). Residues 1598–1612 (SSSPPPLSSPLPEAP) show a composition bias toward pro residues. A compositionally biased stretch (low complexity) spans 1620 to 1638 (VPEAPSLGPPSSSLELLAS). The residue at position 1671 (arginine 1671) is an Omega-N-methylarginine.

This sequence belongs to the protein-tyrosine phosphatase family. Non-receptor class subfamily. Interacts with GRAP2 and GRB2. Interacts with UBAP1 and CHMP4B.

It localises to the nucleus. Its subcellular location is the cytoplasm. It is found in the cytoplasmic vesicle. The protein localises to the endosome. The protein resides in the cytoskeleton. It localises to the cilium basal body. The enzyme catalyses O-phospho-L-tyrosyl-[protein] + H2O = L-tyrosyl-[protein] + phosphate. Its function is as follows. Plays a role in sorting of endocytic ubiquitinated cargos into multivesicular bodies (MVBs) via its interaction with the ESCRT-I complex (endosomal sorting complex required for transport I), and possibly also other ESCRT complexes. May act as a negative regulator of Ras-mediated mitogenic activity. Plays a role in ciliogenesis. The protein is Tyrosine-protein phosphatase non-receptor type 23 (Ptpn23) of Mus musculus (Mouse).